We begin with the raw amino-acid sequence, 290 residues long: Manganese efflux system protein MneS (290 aa).

6 helical membrane-spanning segments follow: residues 15–35 (LVSI…GYLF), 39–61 (ALTA…LIGL), 82–102 (IASL…LFSA), 113–133 (TPDM…LIVY), 159–179 (AFVS…LAWI), and 181–201 (TVTA…IFKE).

It belongs to the cation diffusion facilitator (CDF) transporter (TC 2.A.4) family.

The protein resides in the cell membrane. In terms of biological role, secondary manganese efflux system. May prevent manganese intoxication. This is Manganese efflux system protein MneS from Bacillus subtilis (strain 168).